Here is a 138-residue protein sequence, read N- to C-terminus: Ribosomal RNA large subunit methyltransferase H (138 aa).

S-adenosyl-L-methionine contacts are provided by residues leucine 57, glycine 86, and 105-110 (LSPLTF).

It belongs to the RNA methyltransferase RlmH family. As to quaternary structure, homodimer.

It is found in the cytoplasm. It carries out the reaction pseudouridine(1915) in 23S rRNA + S-adenosyl-L-methionine = N(3)-methylpseudouridine(1915) in 23S rRNA + S-adenosyl-L-homocysteine + H(+). In terms of biological role, specifically methylates the pseudouridine at position 1915 (m3Psi1915) in 23S rRNA. The sequence is that of Ribosomal RNA large subunit methyltransferase H from Prochlorococcus marinus (strain MIT 9301).